Reading from the N-terminus, the 1025-residue chain is MEPFTNDRLQLPRNMIENSMFEEEPDVVDLAKEPCLHPLEPDEVEYEPRGSRLLVRGLGEHEMEEDEEDYESSAKLLGMSFMNRSSGLRNSATGYRQSPDGACSVPSARTMVVCAFVIVVAVSVIMVIYLLPRCTFTKEGCHKKNQSIGLIQPFATNGKLFPWAQIRLPTAVVPLRYELSLHPNLTSMTFRGSVTISVQALQVTWNIILHSTGHNISRVTFMSAVSSQEKQAEILEYAYHGQIAIVAPEALLAGHNYTLKIEYSANISSSYYGFYGFSYTDESNEKKYFAATQFEPLAARSAFPCFDEPAFKATFIIKIIRDEQYTALSNMPKKSSVVLDDGLVQDEFSESVKMSTYLVAFIVGEMKNLSQDVNGTLVSIYAVPEKIGQVHYALETTVKLLEFFQNYFEIQYPLKKLDLVAIPDFEAGAMENWGLLTFREETLLYDSNTSSMADRKLVTKIIAHELAHQWFGNLVTMKWWNDLWLNEGFATFMEYFSLEKIFKELSSYEDFLDARFKTMKKDSLNSSHPISSSVQSSEQIEEMFDSLSYFKGSSLLLMLKTYLSEDVFQHAVVLYLHNHSYASIQSDDLWDSFNEVTNQTLDVKRMMKTWTLQKGFPLVTVQKKGKELFIQQERFFLNMKPEIQPSDTSYLWHIPLSYVTEGRNYSKYQSVSLLDKKSGVINLTEEVLWVKVNINMNGYYIVHYADDDWEALIHQLKINPYVLSDKDRANLINNIFELAGLGKVPLKRAFDLINYLGNENHTAPITEALFQTDLIYNLLEKLGYMDLASRLVTRVFKLLQNQIQQQTWTDEGTPSMRELRSALLEFACTHNLGNCSTTAMKLFDDWMASNGTQSLPTDVMTTVFKVGAKTDKGWSFLLGKYISIGSEAEKNKILEALASSEDVRKLYWLMKSSLNGDNFRTQKLSFIIRTVGRHFPGHLLAWDFVKENWNKLVQKFPLGSYTIQNIVAGSTYLFSTKTHLSEVQAFFENQSEATFRLRCVQEALEVIQLNIQWMEKNLKSLTWWL.

Met1 bears the N-acetylmethionine mark. The Cytoplasmic segment spans residues 1 to 110 (MEPFTNDRLQ…GACSVPSART (110 aa)). The Dileucine internalization motif motif lies at 53 to 54 (LL). Tyr70 carries the phosphotyrosine modification. A Dileucine internalization motif motif is present at residues 76–77 (LL). Phosphoserine is present on residues Ser80 and Ser91. The segment at 96–101 (RQSPDG) is tankyrase binding. The helical; Signal-anchor for type II membrane protein transmembrane segment at 111–131 (MVVCAFVIVVAVSVIMVIYLL) threads the bilayer. The Extracellular portion of the chain corresponds to 132–1025 (PRCTFTKEGC…KNLKSLTWWL (894 aa)). 5 N-linked (GlcNAc...) asparagine glycosylation sites follow: Asn145, Asn184, Asn215, Asn256, and Asn266. Glu295 lines the substrate pocket. Asn368 and Asn374 each carry an N-linked (GlcNAc...) asparagine glycan. Position 428–432 (428–432 (GAMEN)) interacts with substrate. A glycan (N-linked (GlcNAc...) asparagine) is linked at Asn448. Position 464 (His464) interacts with Zn(2+). Glu465 serves as the catalytic Proton acceptor. Residues His468 and Glu487 each contribute to the Zn(2+) site. Asn525, Asn578, Asn598, Asn664, Asn682, Asn760, Asn834, Asn850, and Asn989 each carry an N-linked (GlcNAc...) asparagine glycan.

The protein belongs to the peptidase M1 family. In terms of assembly, homodimer. Binds tankyrases 1 and 2. Requires Zn(2+) as cofactor. Post-translationally, the pregnancy serum form is derived from the membrane-bound form by proteolytic processing. N-glycosylated. In terms of tissue distribution, highly expressed in placenta, heart, kidney and small intestine. Detected at lower levels in neuronal cells in the brain, in skeletal muscle, spleen, liver, testes and colon.

The protein resides in the cell membrane. The protein localises to the secreted. The catalysed reaction is Release of an N-terminal amino acid, Cys-|-Xaa-, in which the half-cystine residue is involved in a disulfide loop, notably in oxytocin or vasopressin. Hydrolysis rates on a range of aminoacyl arylamides exceed that for the cystinyl derivative, however.. In terms of biological role, release of an N-terminal amino acid, cleaves before cysteine, leucine as well as other amino acids. Degrades peptide hormones such as oxytocin, vasopressin and angiotensin III, and plays a role in maintaining homeostasis during pregnancy. May be involved in the inactivation of neuronal peptides in the brain. Cleaves Met-enkephalin and dynorphin. Binds angiotensin IV and may be the angiotensin IV receptor in the brain. The protein is Leucyl-cystinyl aminopeptidase (LNPEP) of Homo sapiens (Human).